A 319-amino-acid polypeptide reads, in one-letter code: MLIFVKSGENMLESILKNTSEIVSIEELTELLKKEEKIAYIGFEPSGRIHMGHYLQIRKMIDLQKAGFKIVILLADLHAYLNQKGTMDEVRALGEENRKVFEAMGLVADYVYGSEFQLKDEYTIDVYKLALSTTLNRARRSMEVIAREDENPKVASVVYPLMQVNDIKHLNADVAVGGMEQRKIHMLSREILPSMGYKAPVCIHNPVLTGLDGEGKMSSSKGNFIAVDDDEATIKKKMKNAFCPMKEVSGNPVLEIAKYYLKYPATVKRPEKFGGDLVLESYEALENAFVEGLHPMDVKNLVSEQLIEILRPIREKMNK.

Tyr-40 contributes to the L-tyrosine binding site. A 'HIGH' region motif is present at residues 45 to 53; that stretch reads PSGRIHMGH. L-tyrosine contacts are provided by Tyr-159, Gln-163, Asp-166, and Gln-181. Residues 216-220 carry the 'KMSKS' region motif; sequence KMSSS. An ATP-binding site is contributed by Ser-219.

It belongs to the class-I aminoacyl-tRNA synthetase family. TyrS type 3 subfamily. As to quaternary structure, homodimer.

Its subcellular location is the cytoplasm. The enzyme catalyses tRNA(Tyr) + L-tyrosine + ATP = L-tyrosyl-tRNA(Tyr) + AMP + diphosphate + H(+). Its function is as follows. Catalyzes the attachment of tyrosine to tRNA(Tyr) in a two-step reaction: tyrosine is first activated by ATP to form Tyr-AMP and then transferred to the acceptor end of tRNA(Tyr). In Methanococcus maripaludis (strain DSM 14266 / JCM 13030 / NBRC 101832 / S2 / LL), this protein is Tyrosine--tRNA ligase.